A 669-amino-acid polypeptide reads, in one-letter code: DNA ligase (669 aa).

Residues 34–38 (DAEYD), 83–84 (SL), and Glu-114 contribute to the NAD(+) site. The active-site N6-AMP-lysine intermediate is the Lys-116. NAD(+) is bound by residues Arg-137, Glu-171, Lys-287, and Lys-311. The Zn(2+) site is built by Cys-405, Cys-408, Cys-423, and Cys-428. In terms of domain architecture, BRCT spans 591 to 669 (NVESYFAGKT…EERFLQELNK (79 aa)).

It belongs to the NAD-dependent DNA ligase family. LigA subfamily. It depends on Mg(2+) as a cofactor. The cofactor is Mn(2+).

The catalysed reaction is NAD(+) + (deoxyribonucleotide)n-3'-hydroxyl + 5'-phospho-(deoxyribonucleotide)m = (deoxyribonucleotide)n+m + AMP + beta-nicotinamide D-nucleotide.. DNA ligase that catalyzes the formation of phosphodiester linkages between 5'-phosphoryl and 3'-hydroxyl groups in double-stranded DNA using NAD as a coenzyme and as the energy source for the reaction. It is essential for DNA replication and repair of damaged DNA. The polypeptide is DNA ligase (Bacillus cereus (strain ATCC 10987 / NRS 248)).